The sequence spans 622 residues: Chaperone protein HscA homolog (622 aa).

Belongs to the heat shock protein 70 family.

Its function is as follows. Chaperone involved in the maturation of iron-sulfur cluster-containing proteins. Has a low intrinsic ATPase activity which is markedly stimulated by HscB. The sequence is that of Chaperone protein HscA homolog from Burkholderia lata (strain ATCC 17760 / DSM 23089 / LMG 22485 / NCIMB 9086 / R18194 / 383).